The sequence spans 349 residues: Protein RAE1 (349 aa).

The disordered stretch occupies residues 1 to 21 (MATFGAPATANSNPNKSYEVT). The residue at position 2 (alanine 2) is an N-acetylalanine. Residues 9–21 (TANSNPNKSYEVT) are compositionally biased toward polar residues. WD repeat units lie at residues 23-62 (SPAD…ASLA), 70-109 (SHDQ…QPVT), 112-151 (MHEG…PVHT), 153-190 (QLPD…TEFK), and 244-283 (NDIY…RLKA). Residues 128–144 (LLATGSWDKTLKYWDTR) carry the DWD box motif.

It belongs to the WD repeat rae1 family. Part of the nuclear pore complex (NPC). The NPC has an eight-fold symmetrical structure comprising a central transport channel and two rings, the cytoplasmic and nuclear rings, to which eight filaments are attached. The cytoplasmic filaments have loose ends, while the nuclear filaments are joined in a distal ring, forming a nuclear basket. NPCs are highly dynamic in configuration and composition, and can be devided in 3 subcomplexes, the NUP62 subcomplex, the NUP107-160 subcomplex and the NUP93 subcomplex, containing approximately 30 different nucleoporin proteins. Interacts with DDB1A.

It localises to the nucleus envelope. It is found in the nucleus. The protein localises to the nuclear pore complex. The polypeptide is Protein RAE1 (Arabidopsis thaliana (Mouse-ear cress)).